Reading from the N-terminus, the 229-residue chain is 5'-methylthioadenosine/S-adenosylhomocysteine nucleosidase (229 aa).

Glu-12 functions as the Proton acceptor in the catalytic mechanism. Residues Gly-78, Ile-152, and 173–174 (ME) contribute to the substrate site. Asp-197 functions as the Proton donor in the catalytic mechanism.

Belongs to the PNP/UDP phosphorylase family. MtnN subfamily.

The catalysed reaction is S-adenosyl-L-homocysteine + H2O = S-(5-deoxy-D-ribos-5-yl)-L-homocysteine + adenine. It catalyses the reaction S-methyl-5'-thioadenosine + H2O = 5-(methylsulfanyl)-D-ribose + adenine. It carries out the reaction 5'-deoxyadenosine + H2O = 5-deoxy-D-ribose + adenine. The protein operates within amino-acid biosynthesis; L-methionine biosynthesis via salvage pathway; S-methyl-5-thio-alpha-D-ribose 1-phosphate from S-methyl-5'-thioadenosine (hydrolase route): step 1/2. In terms of biological role, catalyzes the irreversible cleavage of the glycosidic bond in both 5'-methylthioadenosine (MTA) and S-adenosylhomocysteine (SAH/AdoHcy) to adenine and the corresponding thioribose, 5'-methylthioribose and S-ribosylhomocysteine, respectively. Also cleaves 5'-deoxyadenosine, a toxic by-product of radical S-adenosylmethionine (SAM) enzymes, into 5-deoxyribose and adenine. This Baumannia cicadellinicola subsp. Homalodisca coagulata protein is 5'-methylthioadenosine/S-adenosylhomocysteine nucleosidase.